Here is a 132-residue protein sequence, read N- to C-terminus: Agouti-signaling protein (132 aa).

Positions 1-22 (MDVTRLLLATLLVFLCFFTAYS) are cleaved as a signal peptide. Residue N39 is glycosylated (N-linked (GlcNAc...) asparagine). Positions 62-88 (ISRKEAEKKRSSKKEASMKKVARPRTP) are disordered. Residues 63 to 79 (SRKEAEKKRSSKKEASM) are compositionally biased toward basic and acidic residues. 5 disulfide bridges follow: C93-C108, C100-C114, C107-C125, C111-C132, and C116-C123. The 40-residue stretch at 93–132 (CVATRDSCKPPAPACCDPCASCQCRFFRSACSCRVLSLNC) folds into the Agouti domain.

It localises to the secreted. Involved in the regulation of melanogenesis. The binding of ASP to MC1R precludes alpha-MSH initiated signaling and thus blocks production of cAMP, leading to a down-regulation of eumelanogenesis (brown/black pigment) and thus increasing synthesis of pheomelanin (yellow/red pigment). The protein is Agouti-signaling protein (ASIP) of Macaca radiata (Bonnet macaque).